We begin with the raw amino-acid sequence, 493 residues long: Glutamate--tRNA ligase (493 aa).

Positions 10–20 (PSPTGDPHVGT) match the 'HIGH' region motif. Residues Cys-107, Cys-109, Cys-134, and His-136 each contribute to the Zn(2+) site. The 'KMSKS' region motif lies at 251 to 255 (KLSKR). Residue Lys-254 coordinates ATP.

This sequence belongs to the class-I aminoacyl-tRNA synthetase family. Glutamate--tRNA ligase type 1 subfamily. In terms of assembly, monomer. Requires Zn(2+) as cofactor.

It localises to the cytoplasm. It catalyses the reaction tRNA(Glu) + L-glutamate + ATP = L-glutamyl-tRNA(Glu) + AMP + diphosphate. Functionally, catalyzes the attachment of glutamate to tRNA(Glu) in a two-step reaction: glutamate is first activated by ATP to form Glu-AMP and then transferred to the acceptor end of tRNA(Glu). This is Glutamate--tRNA ligase from Ectopseudomonas mendocina (strain ymp) (Pseudomonas mendocina).